Here is a 747-residue protein sequence, read N- to C-terminus: MEIPNPPTSKCITYWKRKVKSEYMRLRQLKRLQANMGAKALYVANFAKVQEKTQILNEEWKKLRVQPVQSMKPVCGHPFLKKCTIESIFPGFASQHMLMRSLNTVALVPIMYSWSPLQQNFMVEDETVLCNIPYMGDEVKEEDETFIEELINNYDGKVHGEEEMIPGSVLISDAVFLELVDALNQYSDEEEEGHNDTSDGKQDDSKEDLPVTRKRKRHAIEGNKKSSKKQFPNDMIFSAIASMFPENGVPDDMKERYRELTEMSDPNALPPQCTPNIDGPNAKSVQREQSLHSFHTLFCRRCFKYDCFLHPFHATPNVYKRKNKEIKIEPEPCGTDCFLLLEGAKEYAMLHNPRSKCSGRRRRRHHIVSASCSNASASAVAETKEGDSDRDTGNDWASSSSEANSRCQTPTKQKASPAPPQLCVVEAPSEPVEWTGAEESLFRVFHGTYFNNFCSIARLLGTKTCKQVFQFAVKESLILKLPTDELMNPSQKKKRKHRLWAAHCRKIQLKKDNSSTQVYNYQPCDHPDRPCDSTCPCIMTQNFCEKFCQCNPDCQNRFPGCRCKTQCNTKQCPCYLAVRECDPDLCLTCGASEHWDCKVVSCKNCSIQRGLKKHLLLAPSDVAGWGTFIKESVQKNEFISEYCGELISQDEADRRGKVYDKYMSSFLFNLNNDFVVDATRKGNKIRFANHSVNPNCYAKVVMVNGDHRIGIFAKRAIQAGEELFLDYRYSQADALKYVGIERETDVL.

Residues 188–231 form a disordered region; the sequence is DEEEEGHNDTSDGKQDDSKEDLPVTRKRKRHAIEGNKKSSKKQF. Over residues 194–211 the composition is skewed to basic and acidic residues; it reads HNDTSDGKQDDSKEDLPV. Lys327 participates in a covalent cross-link: Glycyl lysine isopeptide (Lys-Gly) (interchain with G-Cter in SUMO2). Positions 378 to 421 are disordered; it reads SAVAETKEGDSDRDTGNDWASSSSEANSRCQTPTKQKASPAPPQ. The span at 382–393 shows a compositional bias: basic and acidic residues; it reads ETKEGDSDRDTG. Residues 395–414 show a composition bias toward polar residues; that stretch reads DWASSSSEANSRCQTPTKQK. Positions 491–496 match the Nuclear localization signal motif; it reads QKKKRK. The 103-residue stretch at 504–606 folds into the CXC domain; the sequence is CRKIQLKKDN…CKVVSCKNCS (103 aa). In terms of domain architecture, SET spans 613 to 728; that stretch reads KHLLLAPSDV…AGEELFLDYR (116 aa).

Belongs to the class V-like SAM-binding methyltransferase superfamily. Histone-lysine methyltransferase family. EZ subfamily. In terms of assembly, component of the PRC2/EED-EZH1 complex, which includes EED, EZH1, SUZ12, RBBP4 and AEBP2. The PRC2/EED-EZH1 is less abundant than the PRC2/EED-EZH2 complex, has weak methyltransferase activity and compacts chromatin in the absence of the methyltransferase cofactor S-adenosyl-L-methionine (SAM). Interacts with EZHIP; the interaction blocks EZH1 methyltransferase activity.

The protein resides in the nucleus. It catalyses the reaction L-lysyl(27)-[histone H3] + 3 S-adenosyl-L-methionine = N(6),N(6),N(6)-trimethyl-L-lysyl(27)-[histone H3] + 3 S-adenosyl-L-homocysteine + 3 H(+). In terms of biological role, polycomb group (PcG) protein. Catalytic subunit of the PRC2/EED-EZH1 complex, which methylates 'Lys-27' of histone H3, leading to transcriptional repression of the affected target gene. Able to mono-, di- and trimethylate 'Lys-27' of histone H3 to form H3K27me1, H3K27me2 and H3K27me3, respectively. Required for embryonic stem cell derivation and self-renewal, suggesting that it is involved in safeguarding embryonic stem cell identity. Compared to EZH2-containing complexes, it is less abundant in embryonic stem cells, has weak methyltransferase activity and plays a less critical role in forming H3K27me3, which is required for embryonic stem cell identity and proper differentiation. The protein is Histone-lysine N-methyltransferase EZH1 (EZH1) of Pongo abelii (Sumatran orangutan).